Consider the following 503-residue polypeptide: Cysteine desulfurase, mitochondrial (503 aa).

A mitochondrion-targeting transit peptide spans 1–27 (MSNIAPQVLRHASRACSRRLSLSASLV). Low complexity predominate over residues 34–50 (RTVTGSGSGGRRYVSGS). The segment at 34-58 (RTVTGSGSGGRRYVSGSQRHNAQAQ) is disordered. Pyridoxal 5'-phosphate-binding positions include 172-173 (AT), Asn-254, Gln-282, and 302-304 (SGH). An N6-(pyridoxal phosphate)lysine modification is found at Lys-305. Thr-342 lines the pyridoxal 5'-phosphate pocket. The active-site Cysteine persulfide intermediate is Cys-427. Cys-427 contacts [2Fe-2S] cluster.

It belongs to the class-V pyridoxal-phosphate-dependent aminotransferase family. NifS/IscS subfamily. It depends on pyridoxal 5'-phosphate as a cofactor.

It localises to the mitochondrion. It carries out the reaction (sulfur carrier)-H + L-cysteine = (sulfur carrier)-SH + L-alanine. Its function is as follows. Catalyzes the removal of elemental sulfur from cysteine to produce alanine. It supplies the inorganic sulfur for iron-sulfur (Fe-S) clusters. Plays a role in both tRNA-processing and mitochondrial metabolism. Involved in the 2-thio-modification of both 5-carboxymethylaminomethyl-2-thiouridine in mitochondrial tRNAs and 5-methoxycarbonylmethyl-2-thiouridine (mcm5s2U) in cytoplasmic tRNAs. The polypeptide is Cysteine desulfurase, mitochondrial (Arthroderma benhamiae (strain ATCC MYA-4681 / CBS 112371) (Trichophyton mentagrophytes)).